The sequence spans 131 residues: Small ribosomal subunit protein uS11 (131 aa).

This sequence belongs to the universal ribosomal protein uS11 family. Part of the 30S ribosomal subunit. Interacts with proteins S7 and S18. Binds to IF-3.

In terms of biological role, located on the platform of the 30S subunit, it bridges several disparate RNA helices of the 16S rRNA. Forms part of the Shine-Dalgarno cleft in the 70S ribosome. In Helicobacter acinonychis (strain Sheeba), this protein is Small ribosomal subunit protein uS11.